A 234-amino-acid polypeptide reads, in one-letter code: MKDEIFKNEIKKQFEFDENVASVFDDMISRSVPYYRESCELSGEILARSLKEKAKIIDLGCSTAEFLIALHHKRPDFELFGVDNSESMLKIAKRKSMAHGAKIDFKNEDILNCDLKGFDCAILNYTLQFIRPIKRSDFVAKIYSNLANNGILIMAEKLIYDDKTLAAQMIEIYENYKQKQGYSAFEIAQKRKALENILIPFSETENRQMLKNAGFKIVEVIFKWANFAVFLAKK.

S-adenosyl-L-methionine contacts are provided by residues tyrosine 35, 60 to 62, 83 to 84, 109 to 110, asparagine 124, and arginine 191; these read GCS, DN, and DI.

It belongs to the class I-like SAM-binding methyltransferase superfamily. Cx-SAM synthase family. Homodimer.

The enzyme catalyses prephenate + S-adenosyl-L-methionine = carboxy-S-adenosyl-L-methionine + 3-phenylpyruvate + H2O. Catalyzes the conversion of S-adenosyl-L-methionine (SAM) to carboxy-S-adenosyl-L-methionine (Cx-SAM). In Campylobacter hominis (strain ATCC BAA-381 / DSM 21671 / CCUG 45161 / LMG 19568 / NCTC 13146 / CH001A), this protein is Carboxy-S-adenosyl-L-methionine synthase.